The primary structure comprises 199 residues: Imidazole glycerol phosphate synthase subunit HisH 2 (199 aa).

In terms of domain architecture, Glutamine amidotransferase type-1 spans 1 to 199 (MIAVIDVSGN…NNFLSLESKC (199 aa)). Catalysis depends on C76, which acts as the Nucleophile. Residues H177 and E179 contribute to the active site.

In terms of assembly, heterodimer of HisH and HisF.

It localises to the cytoplasm. The catalysed reaction is 5-[(5-phospho-1-deoxy-D-ribulos-1-ylimino)methylamino]-1-(5-phospho-beta-D-ribosyl)imidazole-4-carboxamide + L-glutamine = D-erythro-1-(imidazol-4-yl)glycerol 3-phosphate + 5-amino-1-(5-phospho-beta-D-ribosyl)imidazole-4-carboxamide + L-glutamate + H(+). It catalyses the reaction L-glutamine + H2O = L-glutamate + NH4(+). Its pathway is amino-acid biosynthesis; L-histidine biosynthesis; L-histidine from 5-phospho-alpha-D-ribose 1-diphosphate: step 5/9. Its function is as follows. IGPS catalyzes the conversion of PRFAR and glutamine to IGP, AICAR and glutamate. The HisH subunit provides the glutamine amidotransferase activity that produces the ammonia necessary to HisF for the synthesis of IGP and AICAR. This chain is Imidazole glycerol phosphate synthase subunit HisH 2, found in Legionella pneumophila (strain Lens).